A 78-amino-acid polypeptide reads, in one-letter code: Protein EcdD (78 aa).

Involved in the non-oxidative decarboxylation and detoxification of phenolic derivatives under anaerobic conditions, however the precise biochemical function in metabolism of phenolic acid is unknown. The chain is Protein EcdD from Escherichia coli O157:H7.